A 448-amino-acid chain; its full sequence is MPGLKRILTVTILALWLPHPGNAQQQCTNGFDLDRQSGQCLDIDECRTIPEACRGDMMCVNQNGGYLCIPRTNPVYRGPYSNPYSTSYSGPYPAAAPPVPASNYPTISRPLVCRFGYQMDEGNQCVDVDECATDSHQCNPTQICINTEGGYTCSCTDGYWLLEGQCLDIDECRYGYCQQLCANVPGSYSCTCNPGFTLNDDGRSCQDVNECETENPCVQTCVNTYGSFICRCDPGYELEEDGIHCSDMDECSFSEFLCQHECVNQPGSYFCSCPPGYVLLDDNRSCQDINECEHRNHTCTSLQTCYNLQGGFKCIDPISCEEPYLLIGENRCMCPAEHTSCRDQPFTILYRDMDVVSGRSVPADIFQMQATTRYPGAYYIFQIKSGNEGREFYMRQTGPISATLVMTRPIKGPRDIQLDLEMITVNTVINFRGSSVIRLRIYVSQYPF.

Residues 1–23 (MPGLKRILTVTILALWLPHPGNA) form the signal peptide. Residues 42–82 (DIDECRTIPEACRGDMMCVNQNGGYLCIPRTNPVYRGPYSN) enclose the EGF-like 1; calcium-binding domain. 17 disulfides stabilise this stretch: Cys46–Cys59, Cys53–Cys68, Cys131–Cys144, Cys138–Cys153, Cys155–Cys166, Cys172–Cys181, Cys177–Cys190, Cys192–Cys205, Cys211–Cys221, Cys217–Cys230, Cys232–Cys245, Cys251–Cys262, Cys258–Cys271, Cys273–Cys286, Cys292–Cys305, Cys299–Cys314, and Cys320–Cys332. The Cell attachment site motif lies at 54–56 (RGD). The EGF-like 2; calcium-binding domain maps to 127 to 167 (DVDECATDSHQCNPTQICINTEGGYTCSCTDGYWLLEGQCL). Residues 168 to 206 (DIDECRYGYCQQLCANVPGSYSCTCNPGFTLNDDGRSCQ) form the EGF-like 3; calcium-binding domain. Residues 207–246 (DVNECETENPCVQTCVNTYGSFICRCDPGYELEEDGIHCS) form the EGF-like 4; calcium-binding domain. The tract at residues 245 to 448 (CSDMDECSFS…LRIYVSQYPF (204 aa)) is interaction with LOXL1. Positions 247 to 287 (DMDECSFSEFLCQHECVNQPGSYFCSCPPGYVLLDDNRSCQ) constitute an EGF-like 5; calcium-binding domain. 2 N-linked (GlcNAc...) asparagine glycosylation sites follow: Asn283 and Asn296. In terms of domain architecture, EGF-like 6; calcium-binding spans 288–333 (DINECEHRNHTCTSLQTCYNLQGGFKCIDPISCEEPYLLIGENRCM).

Belongs to the fibulin family. In terms of assembly, homodimer. Monomer, homodimerizes in presence of Ca(2+). Interacts with ELN. Interacts (via N-terminus) with the integrins ITGAV/ITGB3, ITGAV/ITGB5 and ITGA9/ITGB1. Interacts with FBN1 (via N-terminal domain). Forms a ternary complex with ELN and FBN1. Interacts with EFEMP2 with moderate affinity. Interacts with LOXL1. Post-translationally, N-glycosylated.

The protein localises to the secreted. It localises to the extracellular space. The protein resides in the extracellular matrix. In terms of biological role, essential for elastic fiber formation, is involved in the assembly of continuous elastin (ELN) polymer and promotes the interaction of microfibrils and ELN. Stabilizes and organizes elastic fibers in the skin, lung and vasculature. Promotes adhesion of endothelial cells through interaction of integrins and the RGD motif. Vascular ligand for integrin receptors which may play a role in vascular development and remodeling. May act as an adapter that mediates the interaction between FBN1 and ELN. The polypeptide is Fibulin-5 (Fbln5) (Mus musculus (Mouse)).